The primary structure comprises 252 residues: Phosphoglycolate phosphatase (252 aa).

The active-site Nucleophile is the Asp-13. Positions 13, 15, and 192 each coordinate Mg(2+).

The protein belongs to the HAD-like hydrolase superfamily. CbbY/CbbZ/Gph/YieH family. As to quaternary structure, monomer. Requires Mg(2+) as cofactor. The cofactor is chloride.

The enzyme catalyses 2-phosphoglycolate + H2O = glycolate + phosphate. It participates in organic acid metabolism; glycolate biosynthesis; glycolate from 2-phosphoglycolate: step 1/1. Functionally, specifically catalyzes the dephosphorylation of 2-phosphoglycolate. Is involved in the dissimilation of the intracellular 2-phosphoglycolate formed during the DNA repair of 3'-phosphoglycolate ends, a major class of DNA lesions induced by oxidative stress. The sequence is that of Phosphoglycolate phosphatase from Salmonella typhimurium (strain LT2 / SGSC1412 / ATCC 700720).